The sequence spans 129 residues: Small ribosomal subunit protein uS11 (129 aa).

This sequence belongs to the universal ribosomal protein uS11 family. As to quaternary structure, part of the 30S ribosomal subunit. Interacts with proteins S7 and S18. Binds to IF-3.

Located on the platform of the 30S subunit, it bridges several disparate RNA helices of the 16S rRNA. Forms part of the Shine-Dalgarno cleft in the 70S ribosome. The sequence is that of Small ribosomal subunit protein uS11 from Beijerinckia indica subsp. indica (strain ATCC 9039 / DSM 1715 / NCIMB 8712).